We begin with the raw amino-acid sequence, 143 residues long: Holo-[acyl-carrier-protein] synthase (143 aa).

Residues Asp9 and Glu63 each contribute to the Mg(2+) site.

This sequence belongs to the P-Pant transferase superfamily. AcpS family. Requires Mg(2+) as cofactor.

It localises to the cytoplasm. It carries out the reaction apo-[ACP] + CoA = holo-[ACP] + adenosine 3',5'-bisphosphate + H(+). Functionally, transfers the 4'-phosphopantetheine moiety from coenzyme A to a Ser of acyl-carrier-protein. This is Holo-[acyl-carrier-protein] synthase from Burkholderia pseudomallei (strain 1106a).